Consider the following 230-residue polypeptide: MTSKIIVALDFEKEAEALALVDQIDPSLCRLKVGKEMFTTLGINFVKQLHQRNFDVFLDLKYHDIPNTVARAVRSAADLGVWMVDLHASGGLRMMEDAKKILEPYGKDAPLLIAVTVLTSMEDLDLLQIGINASPMEQVLRLAHLTQRAGLDGVVCSPQEVEILRNACGEDFKLVTPGIRPIGTDFGDQRRVMTPTAAIRAGSDYLVIGRPITQADNPAEVLRSINVSIG.

Substrate is bound by residues aspartate 10, lysine 32, 59-68, threonine 119, arginine 180, glutamine 189, glycine 209, and arginine 210; that span reads DLKYHDIPNT. Lysine 61 acts as the Proton donor in catalysis.

Belongs to the OMP decarboxylase family. Type 1 subfamily. As to quaternary structure, homodimer.

The enzyme catalyses orotidine 5'-phosphate + H(+) = UMP + CO2. It functions in the pathway pyrimidine metabolism; UMP biosynthesis via de novo pathway; UMP from orotate: step 2/2. Its function is as follows. Catalyzes the decarboxylation of orotidine 5'-monophosphate (OMP) to uridine 5'-monophosphate (UMP). The protein is Orotidine 5'-phosphate decarboxylase of Haemophilus influenzae (strain ATCC 51907 / DSM 11121 / KW20 / Rd).